The sequence spans 222 residues: von Willebrand factor C domain-containing protein 2-like (222 aa).

Residues 1–21 form the signal peptide; that stretch reads MALHIHEACILLLVIPGLVTS. 2 consecutive VWFC domains span residues 51 to 110 and 114 to 172; these read KGCV…PECK and NFCE…PVCK.

Peripherally associated with AMPAR complex. AMPAR complex consists of an inner core made of 4 pore-forming GluA/GRIA proteins (GRIA1, GRIA2, GRIA3 and GRIA4) and 4 major auxiliary subunits arranged in a twofold symmetry. One of the two pairs of distinct binding sites is occupied either by CNIH2, CNIH3 or CACNG2, CACNG3. The other harbors CACNG2, CACNG3, CACNG4, CACNG8 or GSG1L. This inner core of AMPAR complex is complemented by outer core constituents binding directly to the GluA/GRIA proteins at sites distinct from the interaction sites of the inner core constituents. Outer core constituents include at least PRRT1, PRRT2, CKAMP44/SHISA9, FRRS1L and NRN1. The proteins of the inner and outer core serve as a platform for other, more peripherally associated AMPAR constituents, including VWC2L. Alone or in combination, these auxiliary subunits control the gating and pharmacology of the AMPAR complex and profoundly impact their biogenesis and protein processing. Predominantly expressed in the brain (at protein level). Also detected in bones, including femur and calvaria, heart, lung and kidney. Isoform 5 is predominant in lung and heart, compared to isoforms 1 and 3. Isoform 4 is expressed in femur and calvaria at higher levels than isoforms 1 and 5. Isoforms 1 and 4 are expressed at higher levels than isoform 5 in kidney and brain.

It localises to the secreted. The protein resides in the synapse. May play a role in neurogenesis. May promote matrix mineralization, but has been shown to weakly, but significantly inhibit BMP2 and BMP6 activity in a preosteoblastic cell line. This chain is von Willebrand factor C domain-containing protein 2-like (Vwc2l), found in Mus musculus (Mouse).